Here is a 492-residue protein sequence, read N- to C-terminus: Solute carrier family 2, facilitated glucose transporter member 1 (492 aa).

Methionine 1 bears the N-acetylmethionine mark. Topologically, residues 1-11 (MEPTSKKLTGR) are cytoplasmic. The chain crosses the membrane as a helical span at residues 12–33 (LMLAVGGAVLGSLQFGYNTGVI). Residues 34–66 (NAPQKVIEEFYNQTWVQRYGEPIPPATLTTLWS) are Extracellular-facing. An N-linked (GlcNAc...) asparagine glycan is attached at asparagine 45. A helical membrane pass occupies residues 67-87 (LSVAIFSVGGMIGSFSVGLFV). The Cytoplasmic portion of the chain corresponds to 88–90 (NRF). A helical membrane pass occupies residues 91–112 (GRRNSMLMMNLLAFVSAVLMGF). Residues 113–120 (SKLGKSFE) lie on the Extracellular side of the membrane. Residues 121–144 (MLILGRFIIGVYCGLTTGFVPMYV) traverse the membrane as a helical segment. Residues 145–155 (GEVSPTELRGA) are Cytoplasmic-facing. The helical transmembrane segment at 156 to 176 (LGTLHQLGIVVGILIAQVFGL) threads the bilayer. Glutamine 161 is a D-glucose binding site. At 177–185 (DSIMGNQEL) the chain is on the extracellular side. A helical transmembrane segment spans residues 186–206 (WPLLLSVIFIPALLQCILLPF). The Cytoplasmic portion of the chain corresponds to 207–271 (CPESPRFLLI…LFRSAAYRQP (65 aa)). Serine 226 carries the phosphoserine modification. A helical membrane pass occupies residues 272-293 (ILIAVVLQLSQQLSGINAVFYY). Residues 282-283 (QQ) and asparagine 288 contribute to the D-glucose site. Residues 294–306 (STSIFEKAGVQQP) are Extracellular-facing. Residues 307–328 (VYATIGSGIVNTAFTVVSLFVV) form a helical membrane-spanning segment. Position 317 (asparagine 317) interacts with D-glucose. Residues 329–334 (ERAGRR) lie on the Cytoplasmic side of the membrane. A helical transmembrane segment spans residues 335 to 355 (TLHLIGLAGMAGCAVLMTIAL). Over 356–365 (ALLERLPWMS) the chain is Extracellular. A helical transmembrane segment spans residues 366-388 (YLSIVAIFGFVAFFEVGPGPIPW). D-glucose contacts are provided by glutamate 380 and tryptophan 388. The Cytoplasmic segment spans residues 389-401 (FIVAELFSQGPRP). A helical transmembrane segment spans residues 402–422 (AAIAVAGFSNWTSNFIVGMCF). Over 423 to 429 (QYVEQLC) the chain is Extracellular. Residues 430 to 450 (GPYVFIIFTVLLVLFFIFTYF) form a helical membrane-spanning segment. The Cytoplasmic portion of the chain corresponds to 451 to 492 (KVPETKGRTFDEIASGFRQGGASQSDKTPEELFHPLGADSQV). At serine 465 the chain carries Phosphoserine. A disordered region spans residues 468–492 (RQGGASQSDKTPEELFHPLGADSQV). The residue at position 478 (threonine 478) is a Phosphothreonine. Serine 490 is modified (phosphoserine).

This sequence belongs to the major facilitator superfamily. Sugar transporter (TC 2.A.1.1) family. Glucose transporter subfamily. In terms of assembly, found in a complex with ADD2, DMTN and SLC2A1. Interacts (via C-terminus cytoplasmic region) with DMTN. Interacts with SNX27; the interaction is required when endocytosed to prevent degradation in lysosomes and promote recycling to the plasma membrane. Interacts with GIPC (via PDZ domain). Interacts with STOM. Interacts with SGTA (via Gln-rich region). Interacts with BSG. Interacts with SMIM43; the interaction may promote SLC2A1-mediated glucose transport to meet the energy needs of mesendoderm differentiation. In terms of processing, phosphorylation at Ser-226 by PKC promotes glucose uptake by increasing cell membrane localization. Detected in brain capillary (at protein level). Detected in brain capillary.

It is found in the cell membrane. It localises to the photoreceptor inner segment. The catalysed reaction is D-glucose(out) = D-glucose(in). With respect to regulation, the uptake of glucose is inhibited by cytochalasin B. Glucose uptake is increased in response to phorbol ester 12-O-tetradecanoylphorbol-13-acetate (TPA) treatment: TPA-induced glucose uptake requires phosphorylation at Ser-226. In terms of biological role, facilitative glucose transporter, which is responsible for constitutive or basal glucose uptake. Has a very broad substrate specificity; can transport a wide range of aldoses including both pentoses and hexoses. Most important energy carrier of the brain: present at the blood-brain barrier and assures the energy-independent, facilitative transport of glucose into the brain. In association with BSG and NXNL1, promotes retinal cone survival by increasing glucose uptake into photoreceptors. Required for mesendoderm differentiation. The polypeptide is Solute carrier family 2, facilitated glucose transporter member 1 (Bos taurus (Bovine)).